The chain runs to 215 residues: MELSTAKKVVVFDYGFGNVRSAERALARAGAEVEITRDFDTAMNADGLLVPGVGAFAACMKGLKEARGDWIVGRRLAGGRPVMGICVGMQILFERGIEHGVETEGLDEWPGTVGPLEAEIVPHMGWNTVEAPGGSQLFAGLDADARFYFVHSYAVHDWSLDVANPAMRAPLVTWSTHGKPFVAAVENGALWATQFHPEKSGDAGAQLLNNWIGTL.

The region spanning 8–215 (KVVVFDYGFG…QLLNNWIGTL (208 aa)) is the Glutamine amidotransferase type-1 domain. Catalysis depends on Cys86, which acts as the Nucleophile. Active-site residues include His196 and Glu198.

Heterodimer of HisH and HisF.

The protein resides in the cytoplasm. It catalyses the reaction 5-[(5-phospho-1-deoxy-D-ribulos-1-ylimino)methylamino]-1-(5-phospho-beta-D-ribosyl)imidazole-4-carboxamide + L-glutamine = D-erythro-1-(imidazol-4-yl)glycerol 3-phosphate + 5-amino-1-(5-phospho-beta-D-ribosyl)imidazole-4-carboxamide + L-glutamate + H(+). The enzyme catalyses L-glutamine + H2O = L-glutamate + NH4(+). It participates in amino-acid biosynthesis; L-histidine biosynthesis; L-histidine from 5-phospho-alpha-D-ribose 1-diphosphate: step 5/9. Its function is as follows. IGPS catalyzes the conversion of PRFAR and glutamine to IGP, AICAR and glutamate. The HisH subunit catalyzes the hydrolysis of glutamine to glutamate and ammonia as part of the synthesis of IGP and AICAR. The resulting ammonia molecule is channeled to the active site of HisF. This chain is Imidazole glycerol phosphate synthase subunit HisH, found in Streptomyces avermitilis (strain ATCC 31267 / DSM 46492 / JCM 5070 / NBRC 14893 / NCIMB 12804 / NRRL 8165 / MA-4680).